A 218-amino-acid chain; its full sequence is MDKSESTSAGRNRRRRPRRGSRSAPSSADANFRVLSQQLSRLNKTLAAGRPTINHPTFVGSERCRPGYTFTSITLKPPKIDRGSYYGKRLLLPDSVTEYDKKLVSRIQIRVNPLPKFDSTVWVTVRKVPASSDLSVAAISAMFADGASPVLVYQYAASGVQANNKFLYDLSAMRADIGDMRKYAVLVYSKDDALETDELVLHVDIEHQRIPTSGVLPV.

The residue at position 1 (Met-1) is an N-acetylmethionine; by host. The disordered stretch occupies residues 1–28 (MDKSESTSAGRNRRRRPRRGSRSAPSSA). Residues 11–21 (RNRRRRPRRGS) show a composition bias toward basic residues.

The protein belongs to the cucumovirus capsid protein family.

It localises to the virion. In terms of biological role, capsid protein. Probably binds RNA and plays a role in packaging. This chain is Capsid protein, found in Cucumis sativus (Cucumber).